We begin with the raw amino-acid sequence, 209 residues long: PRA1 family protein A2 (209 aa).

A run of 4 helical transmembrane segments spans residues 51–72 (LYYY…ALVT), 76–98 (ALVG…AASF), 142–162 (RWVF…SSCG), and 163–183 (LLWV…HASI).

The protein belongs to the PRA1 family.

The protein resides in the endosome membrane. Functionally, may be involved in both secretory and endocytic intracellular trafficking in the endosomal/prevacuolar compartments. This Arabidopsis thaliana (Mouse-ear cress) protein is PRA1 family protein A2 (PRA1A2).